Consider the following 935-residue polypeptide: Probable mediator of RNA polymerase II transcription subunit 15c (935 aa).

Polar residues predominate over residues 1–13 (MEGNTNWKPNEQG). Disordered stretches follow at residues 1 to 28 (MEGNTNWKPNEQGGNRDAANNRIDWRSQ), 170 to 190 (NLPTSRPNNRDQQGAFQVSSS), 495 to 526 (SSVQSLQKQKRFHHRQMQQQQPQQGNHQHQMQ), 548 to 611 (QQVS…PVPG), and 635 to 654 (SSSKLGTQETPLLFVPPPEP). A compositionally biased stretch (low complexity) spans 511–526 (MQQQQPQQGNHQHQMQ). 2 stretches are compositionally biased toward polar residues: residues 548–577 (QQVSSSQRQVPKQESNVSSSQIQNHSSPQL) and 635–644 (SSSKLGTQET).

It belongs to the plant Mediator complex subunit 15 family. As to quaternary structure, component of the Mediator complex.

Its subcellular location is the nucleus. Component of the Mediator complex, a coactivator involved in the regulated transcription of nearly all RNA polymerase II-dependent genes. Mediator functions as a bridge to convey information from gene-specific regulatory proteins to the basal RNA polymerase II transcription machinery. The Mediator complex, having a compact conformation in its free form, is recruited to promoters by direct interactions with regulatory proteins and serves for the assembly of a functional preinitiation complex with RNA polymerase II and the general transcription factors. The sequence is that of Probable mediator of RNA polymerase II transcription subunit 15c (MED15C) from Arabidopsis thaliana (Mouse-ear cress).